The sequence spans 227 residues: Cytochrome c oxidase subunit 2 (227 aa).

Over 1–14 (MAHAAQMGLQDATS) the chain is Mitochondrial intermembrane. Residues 15–45 (PIMEELISFHDHALMIIFLISFLVLYALFLT) traverse the membrane as a helical segment. At 46–59 (LTTKLTNTNITDAQ) the chain is on the mitochondrial matrix side. A helical membrane pass occupies residues 60–87 (EMETVWTILPAIILVLIALPSLRILYLT). Residues 88–227 (DEINDPSFTI…IFEMGPVFTL (140 aa)) lie on the Mitochondrial intermembrane side of the membrane. Cu cation-binding residues include histidine 161, cysteine 196, glutamate 198, cysteine 200, histidine 204, and methionine 207. Glutamate 198 contributes to the Mg(2+) binding site.

The protein belongs to the cytochrome c oxidase subunit 2 family. In terms of assembly, component of the cytochrome c oxidase (complex IV, CIV), a multisubunit enzyme composed of 14 subunits. The complex is composed of a catalytic core of 3 subunits MT-CO1, MT-CO2 and MT-CO3, encoded in the mitochondrial DNA, and 11 supernumerary subunits COX4I, COX5A, COX5B, COX6A, COX6B, COX6C, COX7A, COX7B, COX7C, COX8 and NDUFA4, which are encoded in the nuclear genome. The complex exists as a monomer or a dimer and forms supercomplexes (SCs) in the inner mitochondrial membrane with NADH-ubiquinone oxidoreductase (complex I, CI) and ubiquinol-cytochrome c oxidoreductase (cytochrome b-c1 complex, complex III, CIII), resulting in different assemblies (supercomplex SCI(1)III(2)IV(1) and megacomplex MCI(2)III(2)IV(2)). Found in a complex with TMEM177, COA6, COX18, COX20, SCO1 and SCO2. Interacts with TMEM177 in a COX20-dependent manner. Interacts with COX20. Interacts with COX16. It depends on Cu cation as a cofactor.

It localises to the mitochondrion inner membrane. The catalysed reaction is 4 Fe(II)-[cytochrome c] + O2 + 8 H(+)(in) = 4 Fe(III)-[cytochrome c] + 2 H2O + 4 H(+)(out). Functionally, component of the cytochrome c oxidase, the last enzyme in the mitochondrial electron transport chain which drives oxidative phosphorylation. The respiratory chain contains 3 multisubunit complexes succinate dehydrogenase (complex II, CII), ubiquinol-cytochrome c oxidoreductase (cytochrome b-c1 complex, complex III, CIII) and cytochrome c oxidase (complex IV, CIV), that cooperate to transfer electrons derived from NADH and succinate to molecular oxygen, creating an electrochemical gradient over the inner membrane that drives transmembrane transport and the ATP synthase. Cytochrome c oxidase is the component of the respiratory chain that catalyzes the reduction of oxygen to water. Electrons originating from reduced cytochrome c in the intermembrane space (IMS) are transferred via the dinuclear copper A center (CU(A)) of subunit 2 and heme A of subunit 1 to the active site in subunit 1, a binuclear center (BNC) formed by heme A3 and copper B (CU(B)). The BNC reduces molecular oxygen to 2 water molecules using 4 electrons from cytochrome c in the IMS and 4 protons from the mitochondrial matrix. This chain is Cytochrome c oxidase subunit 2 (MT-CO2), found in Symphalangus syndactylus (Siamang).